A 267-amino-acid chain; its full sequence is 2-keto-3-deoxy-L-rhamnonate aldolase (267 aa).

The active-site Proton acceptor is His49. Gln151 provides a ligand contact to substrate. Glu153 contributes to the Mg(2+) binding site. Substrate is bound by residues Ala178 and Asp179. Asp179 serves as a coordination point for Mg(2+).

It belongs to the HpcH/HpaI aldolase family. KDR aldolase subfamily. Homohexamer. It depends on Mg(2+) as a cofactor.

It catalyses the reaction 2-dehydro-3-deoxy-L-rhamnonate = (S)-lactaldehyde + pyruvate. In terms of biological role, catalyzes the reversible retro-aldol cleavage of 2-keto-3-deoxy-L-rhamnonate (KDR) to pyruvate and lactaldehyde. The protein is 2-keto-3-deoxy-L-rhamnonate aldolase of Shigella sonnei (strain Ss046).